The sequence spans 408 residues: LL-diaminopimelate aminotransferase (408 aa).

Residues Y15 and G42 each coordinate substrate. Residues Y72, 108-109, Y132, N187, Y218, and 246-248 each bind pyridoxal 5'-phosphate; these read SK and SFS. K109, Y132, and N187 together coordinate substrate. K249 is modified (N6-(pyridoxal phosphate)lysine). The pyridoxal 5'-phosphate site is built by R257 and N292. The substrate site is built by N292 and R388.

It belongs to the class-I pyridoxal-phosphate-dependent aminotransferase family. LL-diaminopimelate aminotransferase subfamily. Homodimer. The cofactor is pyridoxal 5'-phosphate.

It catalyses the reaction (2S,6S)-2,6-diaminopimelate + 2-oxoglutarate = (S)-2,3,4,5-tetrahydrodipicolinate + L-glutamate + H2O + H(+). It functions in the pathway amino-acid biosynthesis; L-lysine biosynthesis via DAP pathway; LL-2,6-diaminopimelate from (S)-tetrahydrodipicolinate (aminotransferase route): step 1/1. Involved in the synthesis of meso-diaminopimelate (m-DAP or DL-DAP), required for both lysine and peptidoglycan biosynthesis. Catalyzes the direct conversion of tetrahydrodipicolinate to LL-diaminopimelate. Is also able to catalyze the reverse reaction in vitro, i.e. the transamination of LL-diaminopimelate with 2-oxoglutarate to produce tetrahydrodipicolinate and glutamate. Cannot use m-DAP, lysine or ornithine as the amino-group donor, when using 2-oxoglutarate as the amino-group acceptor. Cannot use pyruvate, indole 3-pyruvate, oxaloacetate or phenyl pyruvate as the amino-group acceptor, when using LL-DAP as the amino-group donor. The protein is LL-diaminopimelate aminotransferase of Leptospira interrogans serogroup Icterohaemorrhagiae serovar copenhageni (strain Fiocruz L1-130).